A 369-amino-acid polypeptide reads, in one-letter code: Methionine aminopeptidase 1B, chloroplastic (369 aa).

A chloroplast-targeting transit peptide spans 1–61 (MASSVFLSSF…YSPRQFHVSA (61 aa)). Histidine 199 contacts substrate. Residues aspartate 216, aspartate 227, and histidine 290 each coordinate a divalent metal cation. Histidine 297 contacts substrate. A divalent metal cation contacts are provided by glutamate 322 and glutamate 353.

This sequence belongs to the peptidase M24A family. Methionine aminopeptidase type 1 subfamily. The cofactor is Co(2+). Requires Zn(2+) as cofactor. It depends on Mn(2+) as a cofactor. Fe(2+) is required as a cofactor. In terms of tissue distribution, ubiquitous. Preferentially expressed in green tissues.

The protein localises to the plastid. It is found in the chloroplast. The catalysed reaction is Release of N-terminal amino acids, preferentially methionine, from peptides and arylamides.. In terms of biological role, removes the N-terminal methionine from nascent proteins. The N-terminal methionine is often cleaved when the second residue in the primary sequence is small and uncharged (Met-Ala-, Cys, Gly, Pro, Ser, Thr, or Val). The polypeptide is Methionine aminopeptidase 1B, chloroplastic (MAP1B) (Arabidopsis thaliana (Mouse-ear cress)).